Reading from the N-terminus, the 284-residue chain is NADH-cytochrome b5 reductase 1 (284 aa).

A helical membrane pass occupies residues 8–28 (PLFVFSTIAIIISTFVIFYFV). One can recognise an FAD-binding FR-type domain in the interval 41 to 144 (DTFQKFPLIE…RGPKGFFTYT (104 aa)). FAD-binding positions include 124–139 (DSKK…GPKG) and 150–182 (SFGM…KISL).

The protein belongs to the flavoprotein pyridine nucleotide cytochrome reductase family. Monomer. Component of the 2-(3-amino-3-carboxypropyl)histidine synthase complex composed of DPH1, DPH2, DPH3 and a NADH-dependent reductase, predominantly CBR1. Requires FAD as cofactor.

It localises to the mitochondrion outer membrane. The catalysed reaction is 2 Fe(III)-[cytochrome b5] + NADH = 2 Fe(II)-[cytochrome b5] + NAD(+) + H(+). It carries out the reaction 2 Fe(3+)-[Dph3] + NADH = 2 Fe(2+)-[Dph3] + NAD(+) + H(+). Its pathway is protein modification; peptidyl-diphthamide biosynthesis. Functionally, NADH-dependent reductase for DPH3 and cytochrome b5. Required for the first step of diphthamide biosynthesis, a post-translational modification of histidine which occurs in elongation factor 2. DPH1 and DPH2 transfer a 3-amino-3-carboxypropyl (ACP) group from S-adenosyl-L-methionine (SAM) to a histidine residue, the reaction is assisted by a reduction system comprising DPH3 and a NADH-dependent reductase, predominantly CBR1. By reducing DPH3, also involved in the formation of the tRNA wobble base modification mcm5s 2U (5-methoxycarbonylmethyl-2-thiouridine), mediated by the elongator complex. The cytochrome b5/NADH cytochrome b5 reductase electron transfer system supports the catalytic activity of several sterol biosynthetic enzymes. This is NADH-cytochrome b5 reductase 1 (CBR1) from Scheffersomyces stipitis (strain ATCC 58785 / CBS 6054 / NBRC 10063 / NRRL Y-11545) (Yeast).